We begin with the raw amino-acid sequence, 906 residues long: DNA gyrase subunit A (906 aa).

The 490-residue stretch at I35–L524 folds into the Topo IIA-type catalytic domain. The O-(5'-phospho-DNA)-tyrosine intermediate role is filled by Y123. The GyrA-box signature appears at Q551–G557. The disordered stretch occupies residues S886–T906.

This sequence belongs to the type II topoisomerase GyrA/ParC subunit family. Heterotetramer, composed of two GyrA and two GyrB chains. In the heterotetramer, GyrA contains the active site tyrosine that forms a transient covalent intermediate with DNA, while GyrB binds cofactors and catalyzes ATP hydrolysis.

The protein resides in the cytoplasm. The enzyme catalyses ATP-dependent breakage, passage and rejoining of double-stranded DNA.. Functionally, a type II topoisomerase that negatively supercoils closed circular double-stranded (ds) DNA in an ATP-dependent manner to modulate DNA topology and maintain chromosomes in an underwound state. Negative supercoiling favors strand separation, and DNA replication, transcription, recombination and repair, all of which involve strand separation. Also able to catalyze the interconversion of other topological isomers of dsDNA rings, including catenanes and knotted rings. Type II topoisomerases break and join 2 DNA strands simultaneously in an ATP-dependent manner. This chain is DNA gyrase subunit A, found in Rickettsia felis (strain ATCC VR-1525 / URRWXCal2) (Rickettsia azadi).